Consider the following 3011-residue polypeptide: Genome polyprotein (3011 aa).

S2 carries the post-translational modification N-acetylserine; by host. Residues 2–23 form an interaction with STAT1 region; sequence STNPKPQRKTKRNTNRRPQNVK. Residues 2-58 form an interaction with EIF2AK2/PKR region; that stretch reads STNPKPQRKTKRNTNRRPQNVKFPGGGQIVGGVCLLPRRGPRVGVRATRKTSERSQP. The tract at residues 2–59 is interaction with DDX3X; it reads STNPKPQRKTKRNTNRRPQNVKFPGGGQIVGGVCLLPRRGPRVGVRATRKTSERSQPR. The segment at 2–75 is disordered; the sequence is STNPKPQRKT…PKARRPEGRS (74 aa). Topologically, residues 2–168 are cytoplasmic; the sequence is STNPKPQRKT…EDGVNYATGN (167 aa). 2 short sequence motifs (nuclear localization signal) span residues 5 to 13 and 38 to 43; these read PKPQRKTKR and PRRGPR. A compositionally biased stretch (basic residues) spans 7–16; it reads PQRKTKRNTN. Position 53 is a phosphoserine; by host (S53). Short sequence motifs (nuclear localization signal) lie at residues 58 to 64 and 66 to 71; these read PRGRRQP and PKARRP. Basic residues predominate over residues 58-68; sequence PRGRRQPIPKA. Position 99 is a phosphoserine; by host (S99). The important for endoplasmic reticulum and mitochondrial localization stretch occupies residues 112–152; the sequence is PRRRSRNLGKVIDTLTCGFADLMGYIPLVGAPLGGAARALA. Phosphoserine; by host PKA is present on S116. The interaction with APOA2 stretch occupies residues 122 to 173; the sequence is VIDTLTCGFADLMGYIPLVGAPLGGAARALAHGVRVLEDGVNYATGNLPGCS. An important for lipid droplets localization region spans residues 164 to 167; the sequence is YATG. Residues 169–189 traverse the membrane as a helical segment; that stretch reads LPGCSFSIFLLALLSCLTVPA. Residues 178–191 constitute a propeptide, ER anchor for the core protein, removed in mature form by host signal peptidase; sequence LLALLSCLTVPASA. The Lumenal portion of the chain corresponds to 190 to 358; sequence SAVEVRNSSG…AGAHWGVLAG (169 aa). N-linked (GlcNAc...) asparagine; by host glycosylation is found at N196, N209, and N234. The segment at 265 to 296 is important for fusion; that stretch reads IVGAAAFCSAMYVGDLCGSIFLVGQLFTLSPR. The N-linked (GlcNAc...) asparagine; by host glycan is linked to N305. Residues 359–379 traverse the membrane as a helical segment; the sequence is PAYYSMVGNWAKVLVVLLLFA. Over 380–725 the chain is Lumenal; sequence GVDATTQVTG…WEYVVLLFLL (346 aa). Positions 385–411 are HVR1; it reads TQVTGGTAGRNAYRLASLFSTGPSQNI. 4 N-linked (GlcNAc...) (high mannose) asparagine; by host glycosylation sites follow: N417, N423, N430, and N448. 3 disulfides stabilise this stretch: C429/C552, C486/C494, and C503/C508. Residues 474–479 are HVR2; it reads YGGKAS. The segment at 480–493 is CD81-binding 1; it reads NDQRPYCWHYAPRP. N-linked (GlcNAc...) (high mannose) asparagine; by host glycosylation is present at N532. An N-linked (GlcNAc...) asparagine; by host glycan is attached at N540. Positions 544-551 are CD81-binding 2; that stretch reads PPIGNWFG. Residue N556 is glycosylated (N-linked (GlcNAc...) (high mannose) asparagine; by host). Intrachain disulfides connect C564–C569, C581–C585, C597–C620, and C607–C644. N623 and N645 each carry an N-linked (GlcNAc...) (high mannose) asparagine; by host glycan. C652 and C677 form a disulfide bridge. The interval 660 to 671 is PKR/eIF2-alpha phosphorylation homology domain (PePHD); sequence AELSPLLLSTTQ. Residues 726 to 746 form a helical membrane-spanning segment; sequence LADARICACLWMMLLISQVEA. Residues 747 to 757 are Lumenal-facing; sequence ALENLIVLNAA. A helical membrane pass occupies residues 758–778; it reads SLAGTHGIVPFFIFFCAAWYL. Over 779–781 the chain is Cytoplasmic; sequence KGK. Residues 782-803 traverse the membrane as a helical segment; it reads WAPGLVYSVYGMWPLLLLLLAL. The Lumenal segment spans residues 804–813; sequence PQRAYALDQE. A helical membrane pass occupies residues 814 to 834; that stretch reads LAASCGAVVFISLAVLTLSPY. At 835–838 the chain is on the cytoplasmic side; it reads YKQY. The helical transmembrane segment at 839–859 threads the bilayer; that stretch reads MARGIWWLQYMLTRAEALLHV. Over 860 to 881 the chain is Lumenal; that stretch reads WVPSLNARGGRDGAILLMCVLH. A helical membrane pass occupies residues 882–902; that stretch reads PHLLFDITKIMLAILGPLWIL. The 124-residue stretch at 903-1026 folds into the Peptidase C18 domain; sequence QASLLRVPYF…ALTDKGWRLL (124 aa). At 903–1657 the chain is on the cytoplasmic side; that stretch reads QASLLRVPYF…CMSADLEVVT (755 aa). The tract at residues 904–1206 is protease NS2-3; the sequence is ASLLRVPYFV…PVESLETTMR (303 aa). A lipid anchor (S-palmitoyl cysteine; by host) is attached at C922. Residues 929 to 949 form an interaction with host SCPS1 region; sequence AGGHYVQMALLKLGALTGTYI. Residues H952, E972, and C993 each act as for protease NS2 activity; shared with dimeric partner in the active site. The 182-residue stretch at 1027–1208 folds into the Peptidase S29 domain; the sequence is APITAYAQQT…ESLETTMRSP (182 aa). Catalysis depends on charge relay system; for serine protease NS3 activity residues H1083 and D1107. The Zn(2+) site is built by C1123 and C1125. The Charge relay system; for serine protease NS3 activity role is filled by S1165. Zn(2+)-binding residues include C1171 and H1175. One can recognise a Helicase ATP-binding domain in the interval 1217 to 1369; sequence PTVPQSYQVA…SNIEEVALSA (153 aa). 1230 to 1237 is a binding site for ATP; the sequence is APTGSGKS. Mg(2+)-binding residues include S1237 and E1317. The short motif at 1316–1319 is the DECH box element; it reads DECH. The interval 1486–1497 is RNA-binding; the sequence is QRRGRTGRGKHG. Residues 1658 to 1678 traverse the membrane as a helical segment; it reads STWVLVGGVLAALAAYCLSTG. The NS3-binding stretch occupies residues 1679–1690; the sequence is SVVIVGRIILGG. Over 1679–1805 the chain is Cytoplasmic; the sequence is SVVIVGRIIL…AVTSPLTTQQ (127 aa). The helical transmembrane segment at 1806 to 1824 threads the bilayer; that stretch reads TLFFNILGGWVAAQLASPA. Topologically, residues 1825-1828 are lumenal; sequence AATA. A helical membrane pass occupies residues 1829-1849; sequence FVGAGITGAVVGSVGLGKVLV. Position 1850 (D1850) is a topological domain, cytoplasmic. Residues 1851–1871 traverse the membrane as a helical segment; it reads IIAGYGAGVAGALVAFKIMSG. The Lumenal portion of the chain corresponds to 1872–1881; that stretch reads ETPTTEDLVN. A helical transmembrane segment spans residues 1882–1902; it reads LLPAILSPGALVVGVVCAAIL. Topologically, residues 1903–1972 are cytoplasmic; the sequence is RRHVGPGEGA…WISSDCIAPC (70 aa). S-palmitoyl cysteine; by host attachment occurs at residues C1968 and C1972. Residues 1973–2002 lie within the membrane without spanning it; sequence ASSWLKDVWDWICEVLSDFKNWLKAKLVPQ. The Cytoplasmic portion of the chain corresponds to 2003 to 2990; it reads LPGIPFVSCQ…YHSVSHARPR (988 aa). 4 residues coordinate Zn(2+): C2011, C2029, C2031, and C2052. Residues 2120 to 2208 are FKBP8-binding; the sequence is EFFTEVDGVR…ASSSASQLSA (89 aa). The tract at residues 2120 to 2332 is transcriptional activation; the sequence is EFFTEVDGVR…PVPPPRRKRT (213 aa). Residues 2135-2139 form an interaction with non-structural protein 4A region; the sequence is PPCKP. The segment at 2187–2219 is disordered; that stretch reads ARRLKRGSPPSLASSSASQLSAPSLKATCTTHH. The interaction with host SKP2 stretch occupies residues 2189 to 2441; the sequence is RLKRGSPPSL…TPCASEEAKL (253 aa). S2194 is subject to Phosphoserine; by host; in p56. A compositionally biased stretch (low complexity) spans 2194-2211; it reads SPPSLASSSASQLSAPSL. S2197, S2201, S2204, S2207, and S2210 each carry phosphoserine; by host; in p58. The ISDR stretch occupies residues 2210–2249; sequence SLKATCTTHHDSPDADLIEANLLWRQEMGGNITRVESENK. An interaction with EIF2AK2/PKR region spans residues 2210 to 2275; sequence SLKATCTTHH…REISIPAEIL (66 aa). Residues 2249–2306 are NS4B-binding; it reads KIVVLDSFDPLVAEEDDREISIPAEILRKFKQFPPAMPIWARPDYNPPLVEPWKRPDY. Positions 2322 to 2325 match the SH3-binding motif; that stretch reads TPVP. A Nuclear localization signal motif is present at residues 2326 to 2334; sequence PPRRKRTVV. Residue K2350 forms a Glycyl lysine isopeptide (Lys-Gly) (interchain with G-Cter in ubiquitin) linkage. The span at 2352–2369 shows a compositional bias: low complexity; it reads FGSSTTSGVTSGEATESS. Residues 2352–2409 are disordered; that stretch reads FGSSTTSGVTSGEATESSPAPSCGGELDSEAESYSSMPPLEGEPGDPDLSDGSWSTVS. The interval 2354-2377 is V3; it reads SSTTSGVTSGEATESSPAPSCGGE. A phosphoserine; by host mark is found at S2449 and S2462. Residues 2634–2752 enclose the RdRp catalytic domain; sequence PMGFSYDTRC…ICESAGVQED (119 aa). Residues D2640, D2738, and D2739 each coordinate Mg(2+). The helical transmembrane segment at 2991 to 3011 threads the bilayer; it reads LFLWCLLLLSVGVGIYLLPNR.

It belongs to the hepacivirus polyprotein family. Homooligomer. Interacts with E1 (via C-terminus). Interacts with the non-structural protein 5A. Interacts (via N-terminus) with host STAT1 (via SH2 domain); this interaction results in decreased STAT1 phosphorylation and ubiquitin-mediated proteasome-dependent STAT1 degradation, leading to decreased IFN-stimulated gene transcription. Interacts with host STAT3; this interaction constitutively activates STAT3. Interacts with host LTBR receptor. Interacts with host TNFRSF1A receptor and possibly induces apoptosis. Interacts with host HNRPK. Interacts with host YWHAE. Interacts with host UBE3A/E6AP. Interacts with host DDX3X. Interacts with host APOA2. Interacts with host RXRA protein. Interacts with host SP110 isoform 3/Sp110b; this interaction sequesters the transcriptional corepressor SP110 away from the nucleus. Interacts with host CREB3 nuclear transcription protein; this interaction triggers cell transformation. Interacts with host ACY3. Interacts with host C1QR1. Interacts with host RBM24; this interaction, which enhances the interaction of the mature core protein with 5'-UTR, may inhibit viral translation and favor replication. Interacts with host EIF2AK2/PKR; this interaction induces the autophosphorylation of EIF2AK2. Part of the viral assembly initiation complex composed of NS2, E1, E2, NS3, NS4A, NS5A and the mature core protein. As to quaternary structure, forms a heterodimer with envelope glycoprotein E2. Interacts with mature core protein. Interacts with protease NS2. The heterodimer E1/E2 interacts with host CLDN1; this interaction plays a role in viral entry into host cell. Interacts with host SPSB2 (via C-terminus). Part of the viral assembly initiation complex composed of NS2, E1, E2, NS3, NS4A, NS5A and the mature core protein. Interacts with host NEURL3; this interaction prevents E1 binding to glycoprotein E2. In terms of assembly, forms a heterodimer with envelope glycoprotein E1. Interacts with host CD81 and SCARB1 receptors; these interactions play a role in viral entry into host cell. Interacts with host EIF2AK2/PKR; this interaction inhibits EIF2AK2 and probably allows the virus to evade the innate immune response. Interacts with host CD209/DC-SIGN and CLEC4M/DC-SIGNR. Interact with host SPCS1; this interaction is essential for viral particle assembly. Interacts with protease NS2. The heterodimer E1/E2 interacts with host CLDN1; this interaction plays a role in viral entry into host cell. Part of the viral assembly initiation complex composed of NS2, E1, E2, NS3, NS4A, NS5A and the mature core protein. Interacts with host SLC3A2/4F2hc; the interaction may facilitate viral entry into host cell. Interacts with human PLSCR1. Homohexamer. Homoheptamer. Interacts with protease NS2. As to quaternary structure, homodimer. Interacts with host SPCS1; this interaction is essential for viral particle assembly. Interacts with envelope glycoprotein E1. Interacts with envelope glycoprotein E2. Interacts with viroporin p7. Interacts with serine protease/helicase NS3. Part of the replication complex composed of NS2, NS3, NS4A, NS4B, NS5A and the RNA-directed RNA polymerase embedded in an ER-derived membranous web. Part of the viral assembly initiation complex composed of NS2, E1, E2, NS3, NS4A, NS5A and the mature core protein. In terms of assembly, interacts with protease NS2. Interacts with non-structural protein 4A; this interaction stabilizes the folding of NS3 serine protease. NS3-NS4A interaction is essential for NS3 activation and allows membrane anchorage of the latter. NS3/NS4A complex also prevents phosphorylation of host IRF3, thus preventing the establishment of dsRNA induced antiviral state. Interacts with host MAVS; this interaction leads to the cleavage and inhibition of host MAVS. Interacts with host TICAM1; this interaction leads to the cleavage and inhibition of host TICAM1. Interacts with host TANK-binding kinase/TBK1; this interaction results in the inhibition of the association between TBK1 and IRF3, which leads to the inhibition of IRF3 activation. Interacts with host RBM24. Part of the replication complex composed of NS2, NS3, NS4A, NS4B, NS5A and the RNA-directed RNA polymerase embedded in an ER-derived membranous web. Part of the viral assembly initiation complex composed of NS2, E1, E2, NS3, NS4A, NS5A and the mature core protein. Interacts with NS3 serine protease; this interaction stabilizes the folding of NS3 serine protease. NS3-NS4A interaction is essential for NS3 activation and allows membrane anchorage of the latter. Interacts with non-structural protein 5A (via N-terminus). Part of the replication complex composed of NS2, NS3, NS4A, NS4B, NS5A and the RNA-directed RNA polymerase embedded in an ER-derived membranous web. Part of the viral assembly initiation complex composed of NS2, E1, E2, NS3, NS4A, NS5A and the mature core protein. As to quaternary structure, homomultimer. Interacts with non-structural protein NS5A. Interacts with host PLA2G4C; this interaction likely initiates the recruitment of replication complexes to lipid droplets. Interacts with host STING; this interaction disrupts the interaction between STING and TBK1 thereby suppressing the interferon signaling. Part of the replication complex composed of NS2, NS3, NS4A, NS4B, NS5A and the RNA-directed RNA polymerase embedded in an ER-derived membranous web. In terms of assembly, monomer. Homodimer; dimerization is required for RNA-binding. Interacts with the mature core protein. Interacts (via N-terminus) with non-structural protein 4A. Interacts with non-structural protein 4B. Interacts (via region D2) with RNA-directed RNA polymerase. Part of the viral assembly initiation complex composed of NS2, E1, E2, NS3, NS4A, NS5A and the mature core protein. Part of the replication complex composed of NS2, NS3, NS4A, NS4B, NS5A and the RNA-directed RNA polymerase embedded in an ER-derived membranous web. Interacts with host GRB2. Interacts with host BIN1. Interacts with host PIK3R1. Interacts with host SRCAP. Interacts with host FKBP8. Interacts (via C-terminus) with host VAPB (via MSP domain). Interacts with host EIF2AK2/PKR; this interaction leads to disruption of EIF2AK2 dimerization by NS5A and probably allows the virus to evade the innate immune response. Interacts (via N-terminus) with host PACSIN2 (via N-terminus); this interaction attenuates protein kinase C alpha-mediated phosphorylation of PACSIN2 by disrupting the interaction between PACSIN2 and PRKCA. Interacts (via N-terminus) with host SRC kinase (via SH2 domain). Interacts with most Src-family kinases. Interacts with host IFI27 and SKP2; promotes the ubiquitin-mediated proteasomal degradation of NS5A. Interacts with host GPS2. Interacts with host TNFRSF21; this interaction allows the modulation by the virus of JNK, p38 MAPK, STAT3, and Akt signaling pathways in a DR6-dependent manner. Interacts (via N-terminus) with host CIDEB (via N-terminus); this interaction seems to regulate the association of HCV particles with APOE. Interacts with host CHKA/Choline Kinase-alpha; CHKA bridges host PI4KA and NS5A and potentiates NS5A-stimulated PI4KA activity, which then facilitates the targeting of the ternary complex to the ER for viral replication. Interacts with host SPSB2 (via C-terminus); this interaction targets NS5A for ubiquitination and degradation. Interacts with host RAB18; this interaction may promote the association of NS5A and other replicase components with lipid droplets. Interacts (via region D2) with host PPIA/CYPA; the interaction stimulates RNA-binding ability of NS5A and is dependent on the peptidyl-prolyl cis-trans isomerase activity of PPIA/CYPA. Interacts with host TRIM14; this interaction induces the degradation of NS5A. Homooligomer. Interacts with non-structural protein 5A. Interacts with host VAPB. Interacts with host PRK2/PKN2. Interacts with host HNRNPA1 and SEPT6; these interactions facilitate viral replication. Part of the replication complex composed of NS2, NS3, NS4A, NS4B, NS5A and the RNA-directed RNA polymerase. Requires Zn(2+) as cofactor. The cofactor is Mg(2+). Post-translationally, specific enzymatic cleavages in vivo yield mature proteins. The structural proteins, core, E1, E2 and p7 are produced by proteolytic processing by host signal peptidases. The core protein precursor is synthesized as a 23 kDa, which is retained in the ER membrane through the hydrophobic signal peptide. Cleavage by the signal peptidase releases the 21 kDa mature core protein. The cleavage of the core protein precursor occurs between aminoacids 176 and 188 but the exact cleavage site is not known. Some degraded forms of the core protein appear as well during the course of infection. The other proteins (p7, NS2, NS3, NS4A, NS4B, NS5A and NS5B) are cleaved by the viral proteases. Autoprocessing between NS2 and NS3 is mediated by the NS2 cysteine protease catalytic domain and regulated by the NS3 N-terminal domain. In terms of processing, phosphorylated by host PKC and PKA. Ubiquitinated; mediated by UBE3A and leading to core protein subsequent proteasomal degradation. Post-translationally, highly N-glycosylated. In terms of processing, palmitoylation is required for NS2/3 autoprocessing and E2 recruitment to membranes. Palmitoylated. This modification may play a role in its polymerization or in protein-protein interactions. Post-translationally, phosphorylated on serines in a basal form termed p56. p58 is a hyperphosphorylated form of p56. p56 and p58 coexist in the cell in roughly equivalent amounts. Hyperphosphorylation is dependent on the presence of NS4A. Host CSNK1A1/CKI-alpha or RPS6KB1 kinases may be responsible for NS5A phosphorylation. In terms of processing, tyrosine phosphorylation is essential for the interaction with host SRC. The N-terminus is phosphorylated by host PRK2/PKN2.

The protein resides in the host endoplasmic reticulum membrane. It localises to the host mitochondrion membrane. It is found in the virion. Its subcellular location is the host cytoplasm. The protein localises to the host nucleus. The protein resides in the host lipid droplet. It localises to the virion membrane. It is found in the host mitochondrion. Its subcellular location is the host cell membrane. The protein localises to the host perinuclear region. The enzyme catalyses Hydrolysis of four peptide bonds in the viral precursor polyprotein, commonly with Asp or Glu in the P6 position, Cys or Thr in P1 and Ser or Ala in P1'.. It carries out the reaction a ribonucleoside 5'-triphosphate + H2O = a ribonucleoside 5'-diphosphate + phosphate + H(+). It catalyses the reaction ATP + H2O = ADP + phosphate + H(+). The catalysed reaction is RNA(n) + a ribonucleoside 5'-triphosphate = RNA(n+1) + diphosphate. Its activity is regulated as follows. Inhibited by the antiviral drug hexamethylene amiloride. Inhibition by amantadine appears to be genotype-dependent. Also inhibited by long-alkyl-chain iminosugar derivatives. With respect to regulation, activity is up-regulated by PRK2/PKN2-mediated phosphorylation. Functionally, packages viral RNA to form a viral nucleocapsid, and promotes virion budding. Participates in the viral particle production as a result of its interaction with the non-structural protein 5A. Binds RNA and may function as a RNA chaperone to induce the RNA structural rearrangements taking place during virus replication. Modulates viral translation initiation by interacting with viral IRES and 40S ribosomal subunit. Affects various cell signaling pathways, host immunity and lipid metabolism. Prevents the establishment of cellular antiviral state by blocking the interferon-alpha/beta (IFN-alpha/beta) and IFN-gamma signaling pathways and by blocking the formation of phosphorylated STAT1 and promoting ubiquitin-mediated proteasome-dependent degradation of STAT1. Activates STAT3 leading to cellular transformation. Regulates the activity of cellular genes, including c-myc and c-fos. May repress the promoter of p53, and sequester CREB3 and SP110 isoform 3/Sp110b in the cytoplasm. Represses cell cycle negative regulating factor CDKN1A, thereby interrupting an important check point of normal cell cycle regulation. Targets transcription factors involved in the regulation of inflammatory responses and in the immune response: suppresses TNF-induced NF-kappa-B activation, and activates AP-1. Binds to dendritic cells (DCs) via C1QR1, resulting in down-regulation of T-lymphocytes proliferation. Alters lipid metabolism by interacting with hepatocellular proteins involved in lipid accumulation and storage. Induces up-regulation of FAS promoter activity, and thereby contributes to the increased triglyceride accumulation in hepatocytes (steatosis). In terms of biological role, forms a heterodimer with envelope glycoprotein E2, which mediates virus attachment to the host cell, virion internalization through clathrin-dependent endocytosis and fusion with host membrane. Fusion with the host cell is most likely mediated by both E1 and E2, through conformational rearrangements of the heterodimer required for fusion rather than a classical class II fusion mechanism. E1/E2 heterodimer binds host apolipoproteins such as APOB and ApoE thereby forming a lipo-viro-particle (LVP). APOE associated to the LVP allows the initial virus attachment to cell surface receptors such as the heparan sulfate proteoglycans (HSPGs), syndecan-1 (SDC1), syndecan-1 (SDC2), the low-density lipoprotein receptor (LDLR) and scavenger receptor class B type I (SCARB1). The cholesterol transfer activity of SCARB1 allows E2 exposure and binding of E2 to SCARB1 and the tetraspanin CD81. E1/E2 heterodimer binding on CD81 activates the epithelial growth factor receptor (EGFR) signaling pathway. Diffusion of the complex E1-E2-EGFR-SCARB1-CD81 to the cell lateral membrane allows further interaction with Claudin 1 (CLDN1) and occludin (OCLN) to finally trigger HCV entry. Forms a heterodimer with envelope glycoprotein E1, which mediates virus attachment to the host cell, virion internalization through clathrin-dependent endocytosis and fusion with host membrane. Fusion with the host cell is most likely mediated by both E1 and E2, through conformational rearrangements of the heterodimer required for fusion rather than a classical class II fusion mechanism. The interaction between envelope glycoprotein E2 and host apolipoprotein E/APOE allows the proper assembly, maturation and infectivity of the viral particles. This interaction is probably promoted via the up-regulation of cellular autophagy by the virus. E1/E2 heterodimer binds host apolipoproteins such as APOB and APOE thereby forming a lipo-viro-particle (LVP). APOE associated to the LVP allows the initial virus attachment to cell surface receptors such as the heparan sulfate proteoglycans (HSPGs), syndecan-1 (SDC1), syndecan-1 (SDC2), the low-density lipoprotein receptor (LDLR) and scavenger receptor class B type I (SCARB1). The cholesterol transfer activity of SCARB1 allows E2 exposure and binding of E2 to SCARB1 and the tetraspanin CD81. E1/E2 heterodimer binding on CD81 activates the epithelial growth factor receptor (EGFR) signaling pathway. Diffusion of the complex E1-E2-EGFR-SCARB1-CD81 to the cell lateral membrane allows further interaction with Claudin 1 (CLDN1) and occludin (OCLN) to finally trigger HCV entry. Inhibits host EIF2AK2/PKR activation, preventing the establishment of an antiviral state. Viral ligand for CD209/DC-SIGN and CLEC4M/DC-SIGNR, which are respectively found on dendritic cells (DCs), and on liver sinusoidal endothelial cells and macrophage-like cells of lymph node sinuses. These interactions allow the capture of circulating HCV particles by these cells and subsequent facilitated transmission to permissive cells such as hepatocytes and lymphocyte subpopulations. The interaction between E2 and host amino acid transporter complex formed by SLC3A2 and SLC7A5/LAT1 may facilitate viral entry into host cell. Its function is as follows. Ion channel protein that acts as a viroporin and plays an essential role in the assembly, envelopment and secretion of viral particles. Regulates the host cell secretory pathway, which induces the intracellular retention of viral glycoproteins and favors assembly of viral particles. Creates a pore in acidic organelles and releases Ca(2+) and H(+) in the cytoplasm of infected cells, leading to a productive viral infection. High levels of cytoplasmic Ca(2+) may trigger membrane trafficking and transport of viral ER-associated proteins to viroplasms, sites of viral genome replication. This ionic imbalance induces the assembly of the inflammasome complex, which triggers the maturation of pro-IL-1beta into IL-1beta through the action of caspase-1. Targets also host mitochondria and induces mitochondrial depolarization. In addition of its role as a viroporin, acts as a lipid raft adhesion factor. Functionally, cysteine protease required for the proteolytic auto-cleavage between the non-structural proteins NS2 and NS3. The N-terminus of NS3 is required for the function of NS2 protease (active region NS2-3). Promotes the initiation of viral particle assembly by mediating the interaction between structural and non-structural proteins. In terms of biological role, displays three enzymatic activities: serine protease with a chymotrypsin-like fold, NTPase and RNA helicase. NS3 serine protease, in association with NS4A, is responsible for the cleavages of NS3-NS4A, NS4A-NS4B, NS4B-NS5A and NS5A-NS5B. The NS3/NS4A complex prevents phosphorylation of host IRF3, thus preventing the establishment of dsRNA induced antiviral state. The NS3/NS4A complex induces host amino acid transporter component SLC3A2, thus contributing to HCV propagation. NS3 RNA helicase binds to RNA and unwinds both dsDNA and dsRNA in the 3' to 5' direction, and likely resolves RNA complicated stable secondary structures in the template strand. Binds a single ATP and catalyzes the unzipping of a single base pair of dsRNA. Inhibits host antiviral proteins TBK1 and IRF3 thereby preventing the establishment of an antiviral state. Cleaves host MAVS/CARDIF thereby preventing the establishment of an antiviral state. Cleaves host TICAM1/TRIF, thereby disrupting TLR3 signaling and preventing the establishment of an antiviral state. Induces a specific membrane alteration that serves as a scaffold for the virus replication complex. This membrane alteration gives rise to the so-called ER-derived membranous web that contains the replication complex. NS4B self-interaction contributes to its function in membranous web formation. Promotes host TRIF protein degradation in a CASP8-dependent manner thereby inhibiting host TLR3-mediated interferon signaling. Disrupts the interaction between STING and TBK1 contributing to the inhibition of interferon signaling. Its function is as follows. Phosphorylated protein that is indispensable for viral replication and assembly. Both hypo- and hyperphosphorylated states are required for the viral life cycle. The hyperphosphorylated form of NS5A is an inhibitor of viral replication. Involved in RNA-binding and especially in binding to the viral genome. Zinc is essential for RNA-binding. Participates in the viral particle production as a result of its interaction with the mature viral core protein. Its interaction with host VAPB may target the viral replication complex to vesicles. Down-regulates viral IRES translation initiation. Mediates interferon resistance, presumably by interacting with and inhibiting host EIF2AK2/PKR. Prevents BIN1-induced apoptosis. Acts as a transcriptional activator of some host genes important for viral replication when localized in the nucleus. Via the interaction with host PACSIN2, modulates lipid droplet formation in order to promote virion assembly. Modulates TNFRSF21/DR6 signaling pathway for viral propagation. Functionally, RNA-dependent RNA polymerase that performs primer-template recognition and RNA synthesis during viral replication. Initiates RNA transcription/replication at a flavin adenine dinucleotide (FAD), resulting in a 5'- FAD cap on viral RNAs. In this way, recognition of viral 5' RNA by host pattern recognition receptors can be bypassed, thereby evading activation of antiviral pathways. The chain is Genome polyprotein from Hepatitis C virus genotype 1c (isolate India) (HCV).